The sequence spans 347 residues: Zinc finger protein CONSTANS-LIKE 2 (347 aa).

8 residues coordinate Zn(2+): Cys-16, Cys-19, Cys-39, His-44, Cys-59, Cys-62, Cys-82, and His-87. Residues 16 to 58 (CDTCRSAACTVYCEADSAYLCTTCDARVHAANRVASRHERVRV) form a B box-type 1; atypical zinc finger. The B box-type 2; atypical zinc finger occupies 59–101 (CQSCESAPAAFLCKADAASLCTACDAEIHSANPLARRHQRVPI). A CCT domain is found at 278–320 (REARVLRYREKKKTRKFDKTIRYASRKAYAEIRPRIKGRFAKR).

This sequence belongs to the CONSTANS family. Highly expressed in leaves. Expressed at lower levels in stems, flowers and siliques. Not detected in roots.

The protein resides in the nucleus. Putative transcription factor. Does not affect flowering time. In Arabidopsis thaliana (Mouse-ear cress), this protein is Zinc finger protein CONSTANS-LIKE 2 (COL2).